A 544-amino-acid polypeptide reads, in one-letter code: Elongator complex protein 3 (544 aa).

The region spanning 79–369 (RTASGIAVVA…YRIQRDIPMP (291 aa)) is the Radical SAM core domain. 3 residues coordinate [4Fe-4S] cluster: C96, C106, and C109. Acetyl-CoA is bound by residues K161, 472-475 (ELHV), 495-497 (FGT), and Y528. Residues 393–544 (TKCRDIRARE…LDGPYMSKWL (152 aa)) enclose the N-acetyltransferase domain.

This sequence belongs to the ELP3 family. In terms of assembly, component of the elongator complex. Requires [4Fe-4S] cluster as cofactor.

Its subcellular location is the cytoplasm. The catalysed reaction is uridine(34) in tRNA + acetyl-CoA + S-adenosyl-L-methionine + H2O = 5-(carboxymethyl)uridine(34) in tRNA + 5'-deoxyadenosine + L-methionine + CoA + 2 H(+). The protein operates within tRNA modification; 5-methoxycarbonylmethyl-2-thiouridine-tRNA biosynthesis. Its function is as follows. Catalytic tRNA acetyltransferase subunit of the elongator complex which is required for multiple tRNA modifications, including mcm5U (5-methoxycarbonylmethyl uridine), mcm5s2U (5-methoxycarbonylmethyl-2-thiouridine), and ncm5U (5-carbamoylmethyl uridine). In the elongator complex, acts as a tRNA uridine(34) acetyltransferase, which mediates formation of carboxymethyluridine in the wobble base at position 34 in tRNAs. In Schizosaccharomyces pombe (strain 972 / ATCC 24843) (Fission yeast), this protein is Elongator complex protein 3.